A 278-amino-acid chain; its full sequence is Potassium/proton antiporter CemA (278 aa).

The next 4 helical transmembrane spans lie at Tyr-60–Phe-80, Ala-155–Thr-175, Phe-201–Val-221, and Ile-239–Phe-259.

Belongs to the CemA family.

The protein localises to the plastid. The protein resides in the chloroplast inner membrane. The enzyme catalyses K(+)(in) + H(+)(out) = K(+)(out) + H(+)(in). In terms of biological role, contributes to K(+)/H(+) antiport activity by supporting proton efflux to control proton extrusion and homeostasis in chloroplasts in a light-dependent manner to modulate photosynthesis. Prevents excessive induction of non-photochemical quenching (NPQ) under continuous-light conditions. Indirectly promotes efficient inorganic carbon uptake into chloroplasts. The sequence is that of Potassium/proton antiporter CemA from Rhodomonas salina (Cryptomonas salina).